We begin with the raw amino-acid sequence, 742 residues long: Ferric enterobactin receptor PirA (742 aa).

The N-terminal stretch at 1–28 (MYPQFRRGHLAAAVLFASSSLLGGQALA) is a signal peptide. Residues 57 to 184 (QELKQAPGVS…AGGVVNIITK (128 aa)) enclose the TBDR plug domain. Disordered stretches follow at residues 91–112 (GVNL…IDIR) and 409–435 (SSLK…PKSK). Residues 94-108 (LTGNSSSGQRGNNRQ) show a composition bias toward polar residues. A TBDR beta-barrel domain is found at 189-742 (RLRGSMTVFT…AYYVSMTTSF (554 aa)). An intrachain disulfide couples Cys516 to Cys525. Residues 725–742 (ATYNEPGRAYYVSMTTSF) carry the TonB C-terminal box motif.

Belongs to the TonB-dependent receptor family.

It localises to the cell outer membrane. Functionally, specific receptor for the siderophore ferric enterobactin. Probably involved in the transport of siderophores, including host catecholamines such as L-DOPA. The sequence is that of Ferric enterobactin receptor PirA from Pseudomonas aeruginosa (strain ATCC 15692 / DSM 22644 / CIP 104116 / JCM 14847 / LMG 12228 / 1C / PRS 101 / PAO1).